We begin with the raw amino-acid sequence, 787 residues long: Signal transducer and activator of transcription 5B (787 aa).

Residue Tyr-90 is modified to Phosphotyrosine. Ser-128 and Ser-193 each carry phosphoserine. Residues 232–321 (KHQKTLQLLR…MLAEVNATIT (90 aa)) form a required for interaction with NMI region. The region spanning 589–686 (WNDGAILGFV…EVYSKYYTPV (98 aa)) is the SH2 domain. Tyr-682 is subject to Phosphotyrosine. Tyr-699 is modified (phosphotyrosine; by HCK, JAK and PTK6).

The protein belongs to the transcription factor STAT family. As to quaternary structure, upon activation, forms homodimers. Forms also heterodimers with related family members. Binds NR3C1. Interacts with NCOA1. Interacts with NMI. Interacts with SOCS7. Interacts (via SH2 domain) with INSR. Interacts with CPEB3; this inhibits STAT5B-mediated transcriptional activation. Tyrosine phosphorylated in response to signaling via activated KIT, resulting in translocation to the nucleus. Tyrosine phosphorylated in response to signaling via activated FLT3; wild-type FLT3 results in much weaker phosphorylation than constitutively activated mutant FLT3. Alternatively, can be phosphorylated by JAK2. Phosphorylation at Tyr-699 by PTK6 or HCK leads to an increase of its transcriptional activity.

Its subcellular location is the cytoplasm. It is found in the nucleus. Functionally, carries out a dual function: signal transduction and activation of transcription. Mediates cellular responses to the cytokine KITLG/SCF and other growth factors. Binds to the GAS element and activates PRL-induced transcription. Positively regulates hematopoietic/erythroid differentiation. This chain is Signal transducer and activator of transcription 5B (STAT5B), found in Homo sapiens (Human).